Consider the following 962-residue polypeptide: Protease 3 (962 aa).

The first 23 residues, 1–23, serve as a signal peptide directing secretion; it reads MPRSTWFKALLLLVALWGPAVQA. Histidine 88 is a binding site for Zn(2+). The active-site Proton acceptor is the glutamate 91. Residues histidine 92 and glutamate 169 each contribute to the Zn(2+) site.

It belongs to the peptidase M16 family. As to quaternary structure, monomer. The cofactor is Zn(2+).

It is found in the periplasm. It catalyses the reaction Preferential cleavage of 16-Tyr-|-Leu-17 and 25-Phe-|-Tyr-26 bonds of oxidized insulin B chain. Also acts on other substrates of Mw less than 7 kDa such as insulin and glucagon.. Endopeptidase that degrades small peptides of less than 7 kDa, such as glucagon and insulin. This is Protease 3 (ptrA) from Salmonella typhi.